Consider the following 111-residue polypeptide: Small ubiquitin-related modifier 3 (111 aa).

A Ubiquitin-like domain is found at 16–93; sequence AHVILKVKSQ…IDACRAMSGG (78 aa). A Glycyl lysine isopeptide (Gly-Lys) (interchain with K-? in acceptor proteins) cross-link involves residue Gly-93.

It belongs to the ubiquitin family. SUMO subfamily. As to quaternary structure, interacts with SAE2, SCE1, SIZ1 and MMS21. Covalently attached to a number of proteins. Interacts with NPR1; this interaction promotes NPR1 phosphorylation and triggers its sumoylation and subsequent degradation.

Its subcellular location is the nucleus. It is found in the cytoplasm. Functionally, ubiquitin-like protein which can be covalently attached to target lysines as a monomer. Does not seem to be involved in protein degradation and may function as an antagonist of ubiquitin in the degradation process. Promotes NPR1 sumoylation to activate defense gene expression and regulate its degradation. The protein is Small ubiquitin-related modifier 3 of Arabidopsis thaliana (Mouse-ear cress).